The sequence spans 438 residues: Exoglucanase 3 (438 aa).

Residues 1–20 (MFKFAALLALASLVPGFVQA) form the signal peptide. The CBM1 domain maps to 21-59 (QSPVWGQCGGNGWTGPTTCASGSTCVKQNDFYSQCLPNN). Disulfide bonds link C28–C45 and C39–C55. Residues 57-90 (PNNQAPPSTTTQPGTTPPATTTSGGTGPTSGAGN) form a disordered region. A linker region spans residues 60–87 (QAPPSTTTQPGTTPPATTTSGGTGPTSG). Residues 61 to 79 (APPSTTTQPGTTPPATTTS) show a composition bias toward low complexity. Positions 88–438 (AGNPYTGKTV…TLVANANPAL (351 aa)) are catalytic. 2 disulfide bridges follow: C170/C229 and C360/C407. D215 serves as the catalytic Proton donor. Catalysis depends on D393, which acts as the Nucleophile.

It belongs to the glycosyl hydrolase 6 (cellulase B) family.

It catalyses the reaction Hydrolysis of (1-&gt;4)-beta-D-glucosidic linkages in cellulose and cellotetraose, releasing cellobiose from the non-reducing ends of the chains.. Shows enzymatic activity towards crystalline cellulose. At long reaction times. It is also able to degrade carboxymethyl cellulose and barley B-glucan. The chain is Exoglucanase 3 (cel3) from Agaricus bisporus (White button mushroom).